A 60-amino-acid polypeptide reads, in one-letter code: Large ribosomal subunit protein uL30 (60 aa).

Belongs to the universal ribosomal protein uL30 family. In terms of assembly, part of the 50S ribosomal subunit.

This chain is Large ribosomal subunit protein uL30, found in Streptococcus equi subsp. equi (strain 4047).